A 341-amino-acid chain; its full sequence is MIELKEVVKEYRTKNKEVLAVDHVNLSIRAGSIYGVIGFSGAGKSTLIRMFNHLEAPTSGEVIIDGDHIGQLSKNGLRAKRQKVSMIFQHFNLLWSRTVLKNIMFPLEIAGVPRRRAKQKALELVELVGLKGREKAYPSELSGGQKQRVGIARALANDPTVLLCDEATSALDPQTTDEILDLLLKIREQQNLTIVLITHEMHVIRRICDEVAVMESGKVIEHGPVTQVFENPQHTVTKRFVKEDLNDDFETSLTELEPLEKYAYIVRLVFAGSTTTEPIVSSLSTAYDIKINILEANIKNTKNGTVGFLVLHIPYISSVDFGKFEKELIERQVKMEVLRHG.

In terms of domain architecture, ABC transporter spans 2-241 (IELKEVVKEY…PQHTVTKRFV (240 aa)). 38-45 (GFSGAGKS) is a binding site for ATP.

The protein belongs to the ABC transporter superfamily. Methionine importer (TC 3.A.1.24) family. As to quaternary structure, the complex is composed of two ATP-binding proteins (MetN), two transmembrane proteins (MetI) and a solute-binding protein (MetQ).

It is found in the cell membrane. It catalyses the reaction L-methionine(out) + ATP + H2O = L-methionine(in) + ADP + phosphate + H(+). The enzyme catalyses D-methionine(out) + ATP + H2O = D-methionine(in) + ADP + phosphate + H(+). Its function is as follows. Part of the ABC transporter complex MetNIQ involved in methionine import. Responsible for energy coupling to the transport system. The protein is Methionine import ATP-binding protein MetN 2 of Staphylococcus aureus (strain bovine RF122 / ET3-1).